A 408-amino-acid chain; its full sequence is Putative FBD-associated F-box protein At5g50270 (408 aa).

The F-box domain occupies 1–54 (MDRISGLPDELLLRVLSLLPNVKDVVVTMVLSKRWQFLWMMVPKLVYDDSYQNL). The FBD domain maps to 345-408 (PLRDDLSSVP…VNPDKKYEMI (64 aa)).

The sequence is that of Putative FBD-associated F-box protein At5g50270 from Arabidopsis thaliana (Mouse-ear cress).